The sequence spans 540 residues: GMP synthase [glutamine-hydrolyzing] (540 aa).

Positions Lys29–Asp222 constitute a Glutamine amidotransferase type-1 domain. The active-site Nucleophile is the Cys106. Catalysis depends on residues His196 and Glu198. The region spanning Trp223 to Arg415 is the GMPS ATP-PPase domain. Ser250–Ala256 provides a ligand contact to ATP.

Homodimer.

It catalyses the reaction XMP + L-glutamine + ATP + H2O = GMP + L-glutamate + AMP + diphosphate + 2 H(+). It participates in purine metabolism; GMP biosynthesis; GMP from XMP (L-Gln route): step 1/1. In terms of biological role, catalyzes the synthesis of GMP from XMP. The chain is GMP synthase [glutamine-hydrolyzing] from Rhodopseudomonas palustris (strain HaA2).